Consider the following 333-residue polypeptide: Chitinase-like protein 2 (333 aa).

A signal peptide spans 1–27 (MVSKPLFSLLLLTVALVVFQTGTLVNA). A disulfide bridge links C50 with C56. N65 carries N-linked (GlcNAc...) asparagine glycosylation. C165 and C175 are oxidised to a cystine. N-linked (GlcNAc...) asparagine glycans are attached at residues N216 and N252. The cysteines at positions 275 and 313 are disulfide-linked. Residues 307–333 (PHEKLSCADQEPFSSSSSAPPSSGSSS) form a disordered region. Residues 320 to 333 (SSSSSAPPSSGSSS) show a composition bias toward low complexity.

This sequence belongs to the glycosyl hydrolase 19 family. In terms of tissue distribution, mostly expressed in stems, especially in xylem and interfascicular fibers.

The protein resides in the secreted. No chitinase activity. Required for proper cell wall biosynthesis in etiolated seedlings. Prevents lignin accumulation in hypocotyls. The chain is Chitinase-like protein 2 (CTL2) from Arabidopsis thaliana (Mouse-ear cress).